Reading from the N-terminus, the 164-residue chain is SsrA-binding protein (164 aa).

This sequence belongs to the SmpB family.

The protein localises to the cytoplasm. Required for rescue of stalled ribosomes mediated by trans-translation. Binds to transfer-messenger RNA (tmRNA), required for stable association of tmRNA with ribosomes. tmRNA and SmpB together mimic tRNA shape, replacing the anticodon stem-loop with SmpB. tmRNA is encoded by the ssrA gene; the 2 termini fold to resemble tRNA(Ala) and it encodes a 'tag peptide', a short internal open reading frame. During trans-translation Ala-aminoacylated tmRNA acts like a tRNA, entering the A-site of stalled ribosomes, displacing the stalled mRNA. The ribosome then switches to translate the ORF on the tmRNA; the nascent peptide is terminated with the 'tag peptide' encoded by the tmRNA and targeted for degradation. The ribosome is freed to recommence translation, which seems to be the essential function of trans-translation. In Shewanella woodyi (strain ATCC 51908 / MS32), this protein is SsrA-binding protein.